Reading from the N-terminus, the 756-residue chain is Polyribonucleotide nucleotidyltransferase (756 aa).

2 residues coordinate Mg(2+): aspartate 532 and aspartate 538. A KH domain is found at 598-657; sequence PRVTAIKVPVDKIGEVIGPKGKMINSITEQTGANISIEDDGTVFVGATDGPSAQAAIDMI. The region spanning 669–738 is the S1 motif domain; sequence GERFLGTVVK…ARGKISLIPV (70 aa).

Belongs to the polyribonucleotide nucleotidyltransferase family. It depends on Mg(2+) as a cofactor.

It is found in the cytoplasm. The catalysed reaction is RNA(n+1) + phosphate = RNA(n) + a ribonucleoside 5'-diphosphate. In terms of biological role, involved in mRNA degradation. Catalyzes the phosphorolysis of single-stranded polyribonucleotides processively in the 3'- to 5'-direction. The sequence is that of Polyribonucleotide nucleotidyltransferase from Rhodococcus erythropolis (strain PR4 / NBRC 100887).